A 316-amino-acid chain; its full sequence is MYSKILGTGSYLPSQIRTNADLEKMVETSDEWIVARTGIKERRIAAENETVADMGFYAAQNAIEMAGIDKNDIDLIIVATTSGSHTFPSSACQVQAKLGIKGCPAFDLAAACSGFVYALSIADQHIKTGMCKNVLVIGSDTLSKTCDPTDRSTIILFGDGAGAVVVGASEEPGILSTHIYADGEFGDLLSLEVPERGKDADKWLHMAGNEVFKVAVTQLSKLVKDTLEANGMHKSELDWLVPHQANYRIISATAKKLSMSLDQVVITLDRHGNTSAATVPTALDEAVRDGRIQRGQTLLLEAFGGGFTWGSALVRF.

Active-site residues include Cys112 and His243. The interval 244 to 248 is ACP-binding; that stretch reads QANYR. Asn273 is an active-site residue.

The protein belongs to the thiolase-like superfamily. FabH family. In terms of assembly, homodimer.

Its subcellular location is the cytoplasm. It catalyses the reaction malonyl-[ACP] + acetyl-CoA + H(+) = 3-oxobutanoyl-[ACP] + CO2 + CoA. The protein operates within lipid metabolism; fatty acid biosynthesis. Functionally, catalyzes the condensation reaction of fatty acid synthesis by the addition to an acyl acceptor of two carbons from malonyl-ACP. Catalyzes the first condensation reaction which initiates fatty acid synthesis and may therefore play a role in governing the total rate of fatty acid production. Possesses both acetoacetyl-ACP synthase and acetyl transacylase activities. Its substrate specificity determines the biosynthesis of branched-chain and/or straight-chain of fatty acids. In Vibrio vulnificus (strain YJ016), this protein is Beta-ketoacyl-[acyl-carrier-protein] synthase III 1.